The following is a 510-amino-acid chain: MEFSPRAAELTTLLESRISNFYTNFQVDEIGRVVSVGDGIARVYGLNEIQAGEMVEFASGVKGIALNLENENVGIVVFGSDTAIKEGDLVKRTGSIVDVPAGKAMLGRVVDALGVPIDGRGALSDHERRRVEVKAPGIIERKSVHEPMQTGLKAVDSLVPIGRGQRELIIGDRQTGKTAIAIDTILNQKQMNSRSTSESETLYCVYVAIGQKRSTVAQLVQILSEANAMEYSILVAATASDPAPLQFLAPYSGCAMGEYFRDNGMHALIIYDDLSKQAVAYRQMSLLLRRPPGREAFPGDVFYLHSRLLERAAKRSDQTGAGSLTALPVIETQAGDVSAYIPTNVIPITDGQICSETELFYRGIRPAINVGLSVSRVGSAAQLKTMKQVCGSSKLELAQYREVAALAQFGSDLDAATQALLNRGARLTEVPKQPQYAPLPIEKQILVIYAAVNGFCDRMPLDRISQYERAILKSIKTELLQSLLEKGGLTNERKMEPDTFLKECALPYTI.

171–178 (GDRQTGKT) is an ATP binding site.

The protein belongs to the ATPase alpha/beta chains family. F-type ATPases have 2 components, CF(1) - the catalytic core - and CF(0) - the membrane proton channel. CF(1) has five subunits: alpha(3), beta(3), gamma(1), delta(1), epsilon(1). CF(0) has three main subunits: a, b and c.

The protein resides in the mitochondrion. Its subcellular location is the mitochondrion inner membrane. In terms of biological role, mitochondrial membrane ATP synthase (F(1)F(0) ATP synthase or Complex V) produces ATP from ADP in the presence of a proton gradient across the membrane which is generated by electron transport complexes of the respiratory chain. F-type ATPases consist of two structural domains, F(1) - containing the extramembraneous catalytic core, and F(0) - containing the membrane proton channel, linked together by a central stalk and a peripheral stalk. During catalysis, ATP synthesis in the catalytic domain of F(1) is coupled via a rotary mechanism of the central stalk subunits to proton translocation. Subunits alpha and beta form the catalytic core in F(1). Rotation of the central stalk against the surrounding alpha(3)beta(3) subunits leads to hydrolysis of ATP in three separate catalytic sites on the beta subunits. Subunit alpha does not bear the catalytic high-affinity ATP-binding sites. The sequence is that of ATP synthase subunit alpha, mitochondrial (ATPA) from Helianthus annuus (Common sunflower).